Reading from the N-terminus, the 162-residue chain is Cytochrome c-type biogenesis protein CcmE (162 aa).

Residues 1 to 7 (MTRKQRR) lie on the Cytoplasmic side of the membrane. A helical; Signal-anchor for type II membrane protein transmembrane segment spans residues 8-28 (LTMIGGSLVVLAIAAALVLNA). At 29–162 (LRDSIVFFST…EASGKQGVSQ (134 aa)) the chain is on the periplasmic side. 2 residues coordinate heme: H122 and Y126. Residues 138–162 (QGHWKDDYGPQAGAVEASGKQGVSQ) are disordered.

Belongs to the CcmE/CycJ family.

Its subcellular location is the cell inner membrane. Heme chaperone required for the biogenesis of c-type cytochromes. Transiently binds heme delivered by CcmC and transfers the heme to apo-cytochromes in a process facilitated by CcmF and CcmH. In Nitrobacter hamburgensis (strain DSM 10229 / NCIMB 13809 / X14), this protein is Cytochrome c-type biogenesis protein CcmE.